The chain runs to 114 residues: T cell receptor beta variable 5-5 (114 aa).

The first 21 residues, 1 to 21 (MGPGLLCWVLLCLLGAGPVDA), serve as a signal peptide directing secretion. An Ig-like domain is found at 22 to 114 (GVTQSPTHLI…SALYLCASSL (93 aa)). Residues C42 and C110 are joined by a disulfide bond. N90 carries N-linked (GlcNAc...) asparagine glycosylation.

Alpha-beta TR is a heterodimer composed of an alpha and beta chain; disulfide-linked. The alpha-beta TR is associated with the transmembrane signaling CD3 coreceptor proteins to form the TR-CD3 (TcR or TCR). The assembly of alpha-beta TR heterodimers with CD3 occurs in the endoplasmic reticulum where a single alpha-beta TR heterodimer associates with one CD3D-CD3E heterodimer, one CD3G-CD3E heterodimer and one CD247 homodimer forming a stable octameric structure. CD3D-CD3E and CD3G-CD3E heterodimers preferentially associate with TR alpha and TR beta chains, respectively. The association of the CD247 homodimer is the last step of TcR assembly in the endoplasmic reticulum and is required for transport to the cell surface.

The protein localises to the cell membrane. Its function is as follows. V region of the variable domain of T cell receptor (TR) beta chain that participates in the antigen recognition. Alpha-beta T cell receptors are antigen specific receptors which are essential to the immune response and are present on the cell surface of T lymphocytes. Recognize peptide-major histocompatibility (MH) (pMH) complexes that are displayed by antigen presenting cells (APC), a prerequisite for efficient T cell adaptive immunity against pathogens. Binding of alpha-beta TR to pMH complex initiates TR-CD3 clustering on the cell surface and intracellular activation of LCK that phosphorylates the ITAM motifs of CD3G, CD3D, CD3E and CD247 enabling the recruitment of ZAP70. In turn ZAP70 phosphorylates LAT, which recruits numerous signaling molecules to form the LAT signalosome. The LAT signalosome propagates signal branching to three major signaling pathways, the calcium, the mitogen-activated protein kinase (MAPK) kinase and the nuclear factor NF-kappa-B (NF-kB) pathways, leading to the mobilization of transcription factors that are critical for gene expression and essential for T cell growth and differentiation. The T cell repertoire is generated in the thymus, by V-(D)-J rearrangement. This repertoire is then shaped by intrathymic selection events to generate a peripheral T cell pool of self-MH restricted, non-autoaggressive T cells. Post-thymic interaction of alpha-beta TR with the pMH complexes shapes TR structural and functional avidity. This chain is T cell receptor beta variable 5-5, found in Homo sapiens (Human).